We begin with the raw amino-acid sequence, 355 residues long: Ferrochelatase (355 aa).

Positions 214 and 295 each coordinate Fe cation.

Belongs to the ferrochelatase family.

It localises to the cytoplasm. The catalysed reaction is heme b + 2 H(+) = protoporphyrin IX + Fe(2+). It participates in porphyrin-containing compound metabolism; protoheme biosynthesis; protoheme from protoporphyrin-IX: step 1/1. Catalyzes the ferrous insertion into protoporphyrin IX. This Burkholderia thailandensis (strain ATCC 700388 / DSM 13276 / CCUG 48851 / CIP 106301 / E264) protein is Ferrochelatase.